The chain runs to 299 residues: GTPase Era (299 aa).

One can recognise an Era-type G domain in the interval 2 to 170; sequence KTGFVALAGK…LDLIIENLPE (169 aa). A G1 region spans residues 10–17; that stretch reads GKPNVGKS. 10-17 contributes to the GTP binding site; that stretch reads GKPNVGKS. The interval 36–40 is G2; the sequence is QTTRN. Positions 57 to 60 are G3; that stretch reads DTPG. GTP-binding positions include 57 to 61 and 119 to 122; these read DTPGI and NKID. Positions 119–122 are G4; the sequence is NKID. Residues 149–151 form a G5 region; sequence TSA. The 78-residue stretch at 201 to 278 folds into the KH type-2 domain; that stretch reads TYEEIPHSVA…FLDLHVKVKR (78 aa).

Belongs to the TRAFAC class TrmE-Era-EngA-EngB-Septin-like GTPase superfamily. Era GTPase family. In terms of assembly, monomer.

The protein resides in the cytoplasm. The protein localises to the cell inner membrane. Its function is as follows. An essential GTPase that binds both GDP and GTP, with rapid nucleotide exchange. Plays a role in 16S rRNA processing and 30S ribosomal subunit biogenesis and possibly also in cell cycle regulation and energy metabolism. The polypeptide is GTPase Era (Thermosipho melanesiensis (strain DSM 12029 / CIP 104789 / BI429)).